The chain runs to 158 residues: uncharacterized protein (158 aa).

This is an uncharacterized protein from Archaeoglobus fulgidus (strain ATCC 49558 / DSM 4304 / JCM 9628 / NBRC 100126 / VC-16).